We begin with the raw amino-acid sequence, 415 residues long: Diaminopimelate decarboxylase (415 aa).

At Lys54 the chain carries N6-(pyridoxal phosphate)lysine. Pyridoxal 5'-phosphate is bound by residues Gly223 and 264 to 267 (EPGR). Substrate-binding residues include Arg267, Arg303, and Tyr307. The Proton donor role is filled by Cys338. Glu339 and Tyr374 together coordinate substrate. Residue Tyr374 participates in pyridoxal 5'-phosphate binding.

Belongs to the Orn/Lys/Arg decarboxylase class-II family. LysA subfamily. In terms of assembly, homodimer. Requires pyridoxal 5'-phosphate as cofactor.

It catalyses the reaction meso-2,6-diaminopimelate + H(+) = L-lysine + CO2. Its pathway is amino-acid biosynthesis; L-lysine biosynthesis via DAP pathway; L-lysine from DL-2,6-diaminopimelate: step 1/1. Its function is as follows. Specifically catalyzes the decarboxylation of meso-diaminopimelate (meso-DAP) to L-lysine. This is Diaminopimelate decarboxylase from Buchnera aphidicola subsp. Acyrthosiphon pisum (strain APS) (Acyrthosiphon pisum symbiotic bacterium).